Consider the following 207-residue polypeptide: Outer-membrane lipoprotein LolB (207 aa).

Residues 1–21 (MPIRKVSLLRLIPLASLVLAA) form the signal peptide. C22 carries the N-palmitoyl cysteine lipid modification. Residue C22 is the site of S-diacylglycerol cysteine attachment.

Belongs to the LolB family. As to quaternary structure, monomer.

It is found in the cell outer membrane. Its function is as follows. Plays a critical role in the incorporation of lipoproteins in the outer membrane after they are released by the LolA protein. This Serratia proteamaculans (strain 568) protein is Outer-membrane lipoprotein LolB.